The chain runs to 100 residues: Integration host factor subunit beta (100 aa).

It belongs to the bacterial histone-like protein family. In terms of assembly, heterodimer of an alpha and a beta chain.

Its function is as follows. This protein is one of the two subunits of integration host factor, a specific DNA-binding protein that functions in genetic recombination as well as in transcriptional and translational control. This Rhodospirillum rubrum (strain ATCC 11170 / ATH 1.1.1 / DSM 467 / LMG 4362 / NCIMB 8255 / S1) protein is Integration host factor subunit beta.